Reading from the N-terminus, the 190-residue chain is Pyridoxal 5'-phosphate synthase subunit PdxT (190 aa).

Glycine 46–serine 48 is a binding site for L-glutamine. Cysteine 78 acts as the Nucleophile in catalysis. L-glutamine contacts are provided by residues arginine 108 and isoleucine 137–arginine 138. Active-site charge relay system residues include histidine 174 and glutamate 176.

Belongs to the glutaminase PdxT/SNO family. In terms of assembly, in the presence of PdxS, forms a dodecamer of heterodimers. Only shows activity in the heterodimer.

It catalyses the reaction aldehydo-D-ribose 5-phosphate + D-glyceraldehyde 3-phosphate + L-glutamine = pyridoxal 5'-phosphate + L-glutamate + phosphate + 3 H2O + H(+). The enzyme catalyses L-glutamine + H2O = L-glutamate + NH4(+). Its pathway is cofactor biosynthesis; pyridoxal 5'-phosphate biosynthesis. Its function is as follows. Catalyzes the hydrolysis of glutamine to glutamate and ammonia as part of the biosynthesis of pyridoxal 5'-phosphate. The resulting ammonia molecule is channeled to the active site of PdxS. The protein is Pyridoxal 5'-phosphate synthase subunit PdxT of Chloroflexus aggregans (strain MD-66 / DSM 9485).